We begin with the raw amino-acid sequence, 341 residues long: Glycerol-3-phosphate dehydrogenase [NAD(P)+] (341 aa).

Ser-14, Phe-15, Arg-35, and Lys-108 together coordinate NADPH. Positions 108 and 136 each coordinate sn-glycerol 3-phosphate. Ser-140 provides a ligand contact to NADPH. The sn-glycerol 3-phosphate site is built by Lys-191, Asp-244, Ser-254, Arg-255, and Asn-256. The active-site Proton acceptor is Lys-191. Arg-255 is a binding site for NADPH. Residues Val-279 and Glu-281 each coordinate NADPH.

It belongs to the NAD-dependent glycerol-3-phosphate dehydrogenase family.

The protein resides in the cytoplasm. It catalyses the reaction sn-glycerol 3-phosphate + NAD(+) = dihydroxyacetone phosphate + NADH + H(+). It carries out the reaction sn-glycerol 3-phosphate + NADP(+) = dihydroxyacetone phosphate + NADPH + H(+). The protein operates within membrane lipid metabolism; glycerophospholipid metabolism. Its function is as follows. Catalyzes the reduction of the glycolytic intermediate dihydroxyacetone phosphate (DHAP) to sn-glycerol 3-phosphate (G3P), the key precursor for phospholipid synthesis. This Pseudomonas putida (strain GB-1) protein is Glycerol-3-phosphate dehydrogenase [NAD(P)+].